Reading from the N-terminus, the 241-residue chain is Probable transcriptional regulatory protein PSHAb0060 (241 aa).

The protein belongs to the TACO1 family.

It is found in the cytoplasm. The protein is Probable transcriptional regulatory protein PSHAb0060 of Pseudoalteromonas translucida (strain TAC 125).